We begin with the raw amino-acid sequence, 29 residues long: Kappa-theraphotoxin-Ps1a (29 aa).

Cystine bridges form between Cys2-Cys16, Cys9-Cys21, and Cys15-Cys25. Ile29 bears the Isoleucine amide mark.

It belongs to the neurotoxin 30 (phrixotoxin) family. Expressed by the venom gland.

The protein resides in the secreted. Its function is as follows. Potent and specific blocker of Kv4.2/KCND2 (IC(50)=5 nM) and Kv4.3/KCND3 (IC(50)=28 nM) potassium channels. Acts by altering the gating properties of these channels. Also shows moderate inhibition on human voltage-gated sodium channel Nav1.7/SCN9A activation (IC(50)=423 nM). The sequence is that of Kappa-theraphotoxin-Ps1a from Paraphysa scrofa (Chilean copper tarantula).